The following is a 138-amino-acid chain: Altered inheritance of mitochondria protein 11 (138 aa).

2 helical membrane passes run 17–34 and 67–89; these read ARFY…RLIS and LTYA…CWAL.

The protein belongs to the AIM11 family.

The protein localises to the membrane. In Saccharomyces cerevisiae (strain JAY291) (Baker's yeast), this protein is Altered inheritance of mitochondria protein 11 (AIM11).